The primary structure comprises 216 residues: Phosphoenolpyruvate guanylyltransferase (216 aa).

Phosphoenolpyruvate-binding residues include Thr139, Gly155, and Ser158.

The protein belongs to the CofC family.

It catalyses the reaction phosphoenolpyruvate + GTP + H(+) = enolpyruvoyl-2-diphospho-5'-guanosine + diphosphate. It functions in the pathway cofactor biosynthesis; coenzyme F420 biosynthesis. Guanylyltransferase that catalyzes the activation of phosphoenolpyruvate (PEP) as enolpyruvoyl-2-diphospho-5'-guanosine, via the condensation of PEP with GTP. It is involved in the biosynthesis of coenzyme F420, a hydride carrier cofactor. The polypeptide is Phosphoenolpyruvate guanylyltransferase (Streptomyces avermitilis (strain ATCC 31267 / DSM 46492 / JCM 5070 / NBRC 14893 / NCIMB 12804 / NRRL 8165 / MA-4680)).